Here is an 855-residue protein sequence, read N- to C-terminus: E3 ubiquitin-protein ligase TRIM71 (855 aa).

Ala2 carries the N-acetylalanine modification. Residues 12-94 (CLLCKEMCGS…ALKLRCPVCD (83 aa)) form an RING-type zinc finger. Residues 26-42 (SSNSSASSSSSQTSTSS) are compositionally biased toward low complexity. Disordered stretches follow at residues 26 to 48 (SSNSSASSSSSQTSTSSAGGGGP) and 127 to 177 (EEPP…SPGS). Gly residues predominate over residues 135 to 145 (RAGGGPGGAGG). Residues 147–157 (SNHRHHAHHPA) show a composition bias toward basic residues. The segment at 181–228 (RRPHGCSSCDEGNAASSRCLDCQEHLCDNCVRAHQRVRLTKDHYIERG) adopts a B box-type 1; atypical zinc-finger fold. The B box-type 2 zinc-finger motif lies at 260–301 (ERLGFCQHHDDEVLHLYCDTCSVPICRECTLGRHGGHSFAYL). Zn(2+) is bound by residues Cys265, His268, Cys288, and His293. 2 coiled-coil regions span residues 314–352 (QLLADAQQGRQALQLSIEQAQTVAEQVEMKAKVVQSEVK) and 378–411 (QVKAKSLFLQVEKLRQSLSKLESTISAVQQVLEE). The stretch at 466–567 (SSGAFAPLTK…IENSPFKVVV (102 aa)) is one Filamin repeat. 6 NHL repeats span residues 580–623 (GLSF…FKPC), 627–670 (HHKF…FTFE), 674–717 (LLKF…FGPD), 721–764 (LNKY…IHPD), 768–811 (ARFL…FEAN), and 815–855 (LCKF…ILIF).

It belongs to the TRIM/RBCC family. As to quaternary structure, interacts (via NHL repeats) with AGO2; the interaction increases in presence of RNA. Interacts with HSP90AA1. Interacts (via NHL repeats) with MOV10, PABPC1, PUM1, PUM2, STAU2, XRN1 and XRN2 in an RNA-dependent manner. Interacts with SHCBP1; leading to enhance its stability. In terms of processing, autoubiquitinated. Highly expressed in undifferentiated embryonic stem cells (ESCs). Expressed in the epiblast and in interfollicular epidermal stem cells during early development. Also expressed in male germ cells and in the reproductive tract. Highly expressed in neuroepithelial cells, and its expression declines as neurogenesis proceeds (at protein level). Expressed in ependymal cells of the brain.

Its subcellular location is the cytoplasm. It is found in the P-body. The catalysed reaction is S-ubiquitinyl-[E2 ubiquitin-conjugating enzyme]-L-cysteine + [acceptor protein]-L-lysine = [E2 ubiquitin-conjugating enzyme]-L-cysteine + N(6)-ubiquitinyl-[acceptor protein]-L-lysine.. Its pathway is protein modification; protein ubiquitination. In terms of biological role, E3 ubiquitin-protein ligase that cooperates with the microRNAs (miRNAs) machinery and promotes embryonic stem cells proliferation and maintenance. Binds to miRNAs and associates with AGO2, participating in post-transcriptional repression of transcripts such as CDKN1A. Facilitates the G1-S transition to promote rapid embryonic stem cell self-renewal by repressing CDKN1A expression. In addition, participates in post-transcriptional mRNA repression in a miRNA independent mechanism. Required to maintain proliferation and prevent premature differentiation of neural progenitor cells during early neural development: positively regulates FGF signaling by controlling the stability of SHCBP1. Specific regulator of miRNA biogenesis. miRNA Binds MIR29A hairpin and postranscriptionally modulates MIR29A levels, which indirectly regulates TET proteins expression. In Mus musculus (Mouse), this protein is E3 ubiquitin-protein ligase TRIM71 (Trim71).